Consider the following 601-residue polypeptide: Elongation factor 4 (601 aa).

The region spanning 7–189 (RNIRNFSIIA…AIVHRIPPPK (183 aa)) is the tr-type G domain. Residues 19–24 (DHGKST) and 136–139 (NKID) each bind GTP.

Belongs to the TRAFAC class translation factor GTPase superfamily. Classic translation factor GTPase family. LepA subfamily.

The protein resides in the cell inner membrane. It catalyses the reaction GTP + H2O = GDP + phosphate + H(+). Functionally, required for accurate and efficient protein synthesis under certain stress conditions. May act as a fidelity factor of the translation reaction, by catalyzing a one-codon backward translocation of tRNAs on improperly translocated ribosomes. Back-translocation proceeds from a post-translocation (POST) complex to a pre-translocation (PRE) complex, thus giving elongation factor G a second chance to translocate the tRNAs correctly. Binds to ribosomes in a GTP-dependent manner. This Xanthomonas campestris pv. campestris (strain ATCC 33913 / DSM 3586 / NCPPB 528 / LMG 568 / P 25) protein is Elongation factor 4.